The following is a 221-amino-acid chain: Toxin coregulated pilus biosynthesis protein P (221 aa).

Residues 5-109 (RVIYQFPDNL…VKLQGYRINI (105 aa)) constitute a DNA-binding region (ompR/PhoB-type). The chain crosses the membrane as a helical span at residues 143–163 (VVPYLVFSALYVALLPVIWWS).

The protein localises to the cell membrane. Its function is as follows. Involved in TCP pilus biogenesis. The chain is Toxin coregulated pilus biosynthesis protein P (tcpP) from Vibrio cholerae serotype O1 (strain ATCC 39315 / El Tor Inaba N16961).